The sequence spans 663 residues: Syntabulin (663 aa).

Disordered regions lie at residues 1-202 (MGPL…PREK) and 216-267 (VNIH…PEQY). The sufficient for interaction with KIF5B stretch occupies residues 2–417 (GPLRESKKEH…DTMADGLSLE (416 aa)). Position 50 is a phosphoserine (serine 50). Low complexity predominate over residues 57–73 (FNPSSSGRSARTVSSNS). Polar residues predominate over residues 81–97 (CPSSQSVSPVKTPSDAG). Serine 107 is modified (phosphoserine). 3 stretches are compositionally biased toward low complexity: residues 145–158 (EADF…GSIS), 188–198 (SSHKPGSSPSS), and 221–241 (SYAP…SDCS). Positions 271–353 (LQQKEVTVRH…MRSSLADKDK (83 aa)) form a coiled coil. The tract at residues 310–417 (REDWIEEECH…DTMADGLSLE (108 aa)) is sufficient for interaction with STX1A. Residues serine 396 and serine 555 each carry the phosphoserine modification. A helical membrane pass occupies residues 606-626 (SFLVDLLAVAAPVVPTVLWAF).

As to quaternary structure, interacts with STX1A and KIF5B. In terms of tissue distribution, isoform 3, isoform 4 and isoform 5 are expressed in HeLa cell line (at protein level). Isoform 3 is expressed in fetal and adult brain. Isoform 4 is expressed in numerous fetal tissues (brain, kidney, liver, lung, and thymus) and in adult brain, kidney, liver, lung, pancreas, colon, prostate, small intestine, testis and thymus. Isoform 5 is expressed in fetal brain, brain and small intestine.

Its subcellular location is the cytoplasm. It is found in the cytoskeleton. The protein resides in the cytoplasmic vesicle. It localises to the golgi apparatus membrane. Functionally, part of a kinesin motor-adapter complex that is critical for the anterograde axonal transport of active zone components and contributes to activity-dependent presynaptic assembly during neuronal development. The protein is Syntabulin (SYBU) of Homo sapiens (Human).